Here is a 2008-residue protein sequence, read N- to C-terminus: Histone-lysine N-methyltransferase SETD1B (2008 aa).

Positions Met-1–Lys-20 are enriched in basic and acidic residues. The tract at residues Met-1–Lys-42 is disordered. The span at Gln-22–Ser-39 shows a compositional bias: polar residues. The 89-residue stretch at Asp-111 to Lys-199 folds into the RRM domain. 9 disordered regions span residues Asn-249–Lys-390, Phe-402–Thr-652, Pro-682–Pro-725, Arg-950–Glu-1172, Thr-1309–Glu-1328, Val-1345–Thr-1461, Val-1563–Gly-1600, Lys-1674–Arg-1712, and Glu-1814–Glu-1842. Over residues Ser-251–Pro-264 the composition is skewed to low complexity. Composition is skewed to polar residues over residues Phe-265–Pro-293, Pro-301–Pro-315, His-360–Leu-381, Ser-405–Ser-414, and Asp-456–Ser-491. The segment covering Leu-492–Met-521 has biased composition (basic and acidic residues). The span at Ser-524–Pro-537 shows a compositional bias: low complexity. 2 stretches are compositionally biased toward polar residues: residues Gly-540 to Gly-560 and Ala-582 to Arg-604. Basic and acidic residues-rich tracts occupy residues Ser-606–Val-617 and Glu-626–Gly-636. The segment covering Glu-637–Met-646 has biased composition (acidic residues). The span at Glu-979–Glu-997 shows a compositional bias: basic and acidic residues. The segment covering Leu-1011–Glu-1020 has biased composition (acidic residues). Residues Thr-1021 to Glu-1031 are compositionally biased toward basic and acidic residues. 2 stretches are compositionally biased toward acidic residues: residues Glu-1050–Ala-1094 and Glu-1105–Asp-1149. The span at Arg-1150 to Glu-1172 shows a compositional bias: basic and acidic residues. Over residues Val-1345 to Pro-1356 the composition is skewed to low complexity. Over residues Ser-1378–Leu-1392 the composition is skewed to basic and acidic residues. Positions Leu-1418 to Ser-1427 are enriched in low complexity. 2 stretches are compositionally biased toward basic residues: residues Leu-1577 to Arg-1587 and Lys-1681 to Lys-1690. Residues Ile-1699–Gln-1710 show a composition bias toward pro residues. The short motif at Arg-1840–Arg-1845 is the RxxxRR motif element. Residues Lys-1869–Lys-1986 form the SET domain. Residue Tyr-1985 coordinates S-adenosyl-L-methionine. The 17-residue stretch at Val-1992 to Asn-2008 folds into the Post-SET domain.

This sequence belongs to the class V-like SAM-binding methyltransferase superfamily. In terms of assembly, component of the SET1B/COMPASS complex.

Its subcellular location is the nucleus speckle. The protein resides in the chromosome. The catalysed reaction is L-lysyl(4)-[histone H3] + 3 S-adenosyl-L-methionine = N(6),N(6),N(6)-trimethyl-L-lysyl(4)-[histone H3] + 3 S-adenosyl-L-homocysteine + 3 H(+). Histone methyltransferase that specifically methylates 'Lys-4' of histone H3, when part of the SET1 histone methyltransferase (HMT) complex, but not if the neighboring 'Lys-9' residue is already methylated. H3 'Lys-4' methylation represents a specific tag for epigenetic transcriptional activation. The polypeptide is Histone-lysine N-methyltransferase SETD1B (SETD1B) (Gallus gallus (Chicken)).